The following is a 115-amino-acid chain: Integration host factor subunit alpha (115 aa).

The protein belongs to the bacterial histone-like protein family. Heterodimer of an alpha and a beta chain.

In terms of biological role, this protein is one of the two subunits of integration host factor, a specific DNA-binding protein that functions in genetic recombination as well as in transcriptional and translational control. This chain is Integration host factor subunit alpha, found in Burkholderia pseudomallei (strain K96243).